A 254-amino-acid polypeptide reads, in one-letter code: Sulfoacetaldehyde reductase (254 aa).

8 to 32 (FITGATSGFGEAAAQVFADAGWSLV) contributes to the NADP(+) binding site. Ser-141 lines the substrate pocket. The active-site Proton acceptor is Tyr-154.

This sequence belongs to the short-chain dehydrogenases/reductases (SDR) family. As to quaternary structure, homodimer and heterotetramer.

It catalyses the reaction 2-hydroxyethane-1-sulfonate + NADP(+) = sulfoacetaldehyde + NADPH + H(+). Its pathway is organosulfur degradation. Its function is as follows. Catalyzes the formation of isethionate from 2-sulfoacetaldehyde in the deaminative pathway of taurine. The enzyme is specific for NADPH; NADH is not a substrate. The sequence is that of Sulfoacetaldehyde reductase (isfD) from Klebsiella oxytoca.